Here is a 78-residue protein sequence, read N- to C-terminus: Translation initiation factor IF-1, chloroplastic (78 aa).

Residues 1 to 72 (MKKQNLIDME…TKGRITYRLR (72 aa)) enclose the S1-like domain.

The protein belongs to the IF-1 family. In terms of assembly, component of the 30S ribosomal translation pre-initiation complex which assembles on the 30S ribosome in the order IF-2 and IF-3, IF-1 and N-formylmethionyl-tRNA(fMet); mRNA recruitment can occur at any time during PIC assembly.

It is found in the plastid. The protein resides in the chloroplast. Its function is as follows. One of the essential components for the initiation of protein synthesis. Stabilizes the binding of IF-2 and IF-3 on the 30S subunit to which N-formylmethionyl-tRNA(fMet) subsequently binds. Helps modulate mRNA selection, yielding the 30S pre-initiation complex (PIC). Upon addition of the 50S ribosomal subunit IF-1, IF-2 and IF-3 are released leaving the mature 70S translation initiation complex. The chain is Translation initiation factor IF-1, chloroplastic from Physcomitrium patens (Spreading-leaved earth moss).